The chain runs to 222 residues: Pectate lyase A (222 aa).

Residues 1-25 (MKKMLTLLLSAGLVASIFGVMPAAA) form the signal peptide.

This sequence belongs to the polysaccharide lyase 3 family. Ca(2+) serves as cofactor.

The protein localises to the secreted. It carries out the reaction Eliminative cleavage of (1-&gt;4)-alpha-D-galacturonan to give oligosaccharides with 4-deoxy-alpha-D-galact-4-enuronosyl groups at their non-reducing ends.. The enzyme catalyses Eliminative cleavage of (1-&gt;4)-alpha-D-galacturonan methyl ester to give oligosaccharides with 4-deoxy-6-O-methyl-alpha-D-galact-4-enuronosyl groups at their non-reducing ends.. The protein operates within glycan metabolism; pectin degradation; 2-dehydro-3-deoxy-D-gluconate from pectin: step 2/5. Its activity is regulated as follows. Strongly inhibited by Ba(2+). To a lesser extent, is also inhibited by Sn(2+), Mg(2+) and Ag(+). Inhibited by EDTA in vitro. Functionally, catalyzes the depolymerization of both polygalacturonate and pectins of methyl esterification degree from 22 to 89%, with an endo mode of action. In contrast to the majority of pectate lyases, displays high activity on highly methylated pectins. Is not able to cleave trigalacturonate. Does not degrade xylans and carboxymethylcellulose (CMC). The polypeptide is Pectate lyase A (pelA) (Paenibacillus barcinonensis).